A 165-amino-acid polypeptide reads, in one-letter code: MESDSMFIGFGYDRHPLVEGRRLVLAGVEIDAPLGSLGHSDGDVLSHAIIDALLGAGCLGDIGTWFPETKEYKDANSLDLLKETVKILEERGFSVVNVDATVVASIVKLSPYREKILENLKSALETSRVNVKFKSGNTLGFEGEERGISAYAVCLVEEKKCTKSI.

A divalent metal cation is bound by residues aspartate 13 and histidine 15. 4-CDP-2-C-methyl-D-erythritol 2-phosphate contacts are provided by residues 13 to 15 (DRH) and 39 to 40 (HS). Histidine 47 provides a ligand contact to a divalent metal cation. 4-CDP-2-C-methyl-D-erythritol 2-phosphate-binding positions include 61–63 (DIG) and phenylalanine 141.

It belongs to the IspF family. Homotrimer. A divalent metal cation is required as a cofactor.

It carries out the reaction 4-CDP-2-C-methyl-D-erythritol 2-phosphate = 2-C-methyl-D-erythritol 2,4-cyclic diphosphate + CMP. Its pathway is isoprenoid biosynthesis; isopentenyl diphosphate biosynthesis via DXP pathway; isopentenyl diphosphate from 1-deoxy-D-xylulose 5-phosphate: step 4/6. Involved in the biosynthesis of isopentenyl diphosphate (IPP) and dimethylallyl diphosphate (DMAPP), two major building blocks of isoprenoid compounds. Catalyzes the conversion of 4-diphosphocytidyl-2-C-methyl-D-erythritol 2-phosphate (CDP-ME2P) to 2-C-methyl-D-erythritol 2,4-cyclodiphosphate (ME-CPP) with a corresponding release of cytidine 5-monophosphate (CMP). This Thermotoga neapolitana (strain ATCC 49049 / DSM 4359 / NBRC 107923 / NS-E) protein is 2-C-methyl-D-erythritol 2,4-cyclodiphosphate synthase.